Consider the following 197-residue polypeptide: Phosphoheptose isomerase (197 aa).

The SIS domain occupies 36–197; the sequence is MVNALLNEGK…IDSQLFGSEE (162 aa). 51–53 is a substrate binding site; it reads NGG. Zn(2+) is bound by residues H60 and E64. Residues E64, 93-94, 119-121, S124, and Q174 each bind substrate; these read ND and STS. The Zn(2+) site is built by Q174 and H182.

The protein belongs to the SIS family. GmhA subfamily. As to quaternary structure, homotetramer. Zn(2+) is required as a cofactor.

It is found in the cytoplasm. It catalyses the reaction 2 D-sedoheptulose 7-phosphate = D-glycero-alpha-D-manno-heptose 7-phosphate + D-glycero-beta-D-manno-heptose 7-phosphate. Its pathway is carbohydrate biosynthesis; D-glycero-D-manno-heptose 7-phosphate biosynthesis; D-glycero-alpha-D-manno-heptose 7-phosphate and D-glycero-beta-D-manno-heptose 7-phosphate from sedoheptulose 7-phosphate: step 1/1. Its function is as follows. Catalyzes the isomerization of sedoheptulose 7-phosphate in D-glycero-D-manno-heptose 7-phosphate. This is Phosphoheptose isomerase from Pseudomonas fluorescens (strain Pf0-1).